The primary structure comprises 87 residues: U3-theraphotoxin-Hhn1e (87 aa).

The first 24 residues, 1–24 (MVNMKASMFLTFAGLVLLFVVCYA), serve as a signal peptide directing secretion. Residues 25 to 52 (SESEEKEFPKGMLSSIFAVDNDFKQEER) constitute a propeptide that is removed on maturation. 3 cysteine pairs are disulfide-bonded: Cys54–Cys67, Cys61–Cys72, and Cys66–Cys79.

This sequence belongs to the neurotoxin 10 (Hwtx-1) family. 51 (Hntx-8) subfamily. Hntx-8 sub-subfamily. As to expression, expressed by the venom gland.

Its subcellular location is the secreted. Its function is as follows. Ion channel inhibitor. The chain is U3-theraphotoxin-Hhn1e from Cyriopagopus hainanus (Chinese bird spider).